A 291-amino-acid chain; its full sequence is Omega-amidase NIT3 (291 aa).

In terms of domain architecture, CN hydrolase spans 11 to 264 (IKVALVQLSG…EEIIYAELDP (254 aa)). Position 34 is a phosphothreonine (T34). Residue E53 is the Proton acceptor of the active site. K128 serves as the catalytic Proton donor. C169 serves as the catalytic Nucleophile.

Belongs to the carbon-nitrogen hydrolase superfamily. NIT1/NIT2 family. Homodimer.

The enzyme catalyses a monoamide of a dicarboxylate + H2O = a dicarboxylate + NH4(+). Its function is as follows. Possesses omega-amidase activity. The role of omega-amidase is to remove potentially toxic intermediates by converting 2-oxoglutaramate and 2-oxosuccinamate to biologically useful 2-oxoglutarate and oxaloacetate, respectively. This chain is Omega-amidase NIT3 (NIT3), found in Saccharomyces cerevisiae (strain ATCC 204508 / S288c) (Baker's yeast).